The primary structure comprises 160 residues: Cytochrome b6-f complex subunit 4 (160 aa).

3 helical membrane passes run 36–56 (LLYI…GLAI), 95–115 (LLGV…PFLE), and 131–151 (TVFL…TLPI).

Belongs to the cytochrome b family. PetD subfamily. As to quaternary structure, the 4 large subunits of the cytochrome b6-f complex are cytochrome b6, subunit IV (17 kDa polypeptide, petD), cytochrome f and the Rieske protein, while the 4 small subunits are petG, petL, petM and petN. The complex functions as a dimer.

It localises to the plastid. The protein resides in the chloroplast thylakoid membrane. In terms of biological role, component of the cytochrome b6-f complex, which mediates electron transfer between photosystem II (PSII) and photosystem I (PSI), cyclic electron flow around PSI, and state transitions. This chain is Cytochrome b6-f complex subunit 4, found in Acorus calamus (Sweet flag).